The sequence spans 268 residues: tRNA pseudouridine synthase A (268 aa).

Residue aspartate 52 is the Nucleophile of the active site. Tyrosine 110 contributes to the substrate binding site.

This sequence belongs to the tRNA pseudouridine synthase TruA family. In terms of assembly, homodimer.

It carries out the reaction uridine(38/39/40) in tRNA = pseudouridine(38/39/40) in tRNA. Its function is as follows. Formation of pseudouridine at positions 38, 39 and 40 in the anticodon stem and loop of transfer RNAs. The protein is tRNA pseudouridine synthase A of Prochlorococcus marinus (strain MIT 9301).